The following is a 508-amino-acid chain: Phenylalanine--tRNA ligase alpha subunit (508 aa).

Residue Ala-2 is modified to N-acetylalanine. The residue at position 190 (Thr-190) is a Phosphothreonine. A phosphoserine mark is found at Ser-193 and Ser-301. Lys-311 carries the post-translational modification N6-acetyllysine. L-phenylalanine is bound by residues Thr-329, 372–374 (QIE), and Tyr-412. Glu-414 lines the Mg(2+) pocket. Phe-438 provides a ligand contact to L-phenylalanine.

It belongs to the class-II aminoacyl-tRNA synthetase family. Phe-tRNA synthetase alpha subunit type 2 subfamily. In terms of assembly, heterotetramer; dimer of two heterodimers formed by FARSA and FARSB.

The protein localises to the cytoplasm. It carries out the reaction tRNA(Phe) + L-phenylalanine + ATP = L-phenylalanyl-tRNA(Phe) + AMP + diphosphate + H(+). The chain is Phenylalanine--tRNA ligase alpha subunit (FARSA) from Homo sapiens (Human).